The chain runs to 386 residues: DNA (cytosine-5)-methyltransferase 3-like (386 aa).

Positions 41–173 (EVKANQRNIE…LKAFYDRESE (133 aa)) constitute an ADD domain. The GATA-type; atypical zinc finger occupies 52-82 (ICICCGSLQVHTQHPLFEGGICAPCKDKFLD). Residues 93–149 (QSYCSICCSGETLLICGNPDCTRCYCFECVDSLVGPGTSGKVHAMSNWVCYLCLPSS) form a PHD-type; atypical zinc finger.

In terms of assembly, homodimer. Heterotetramer composed of 1 DNMT3A homodimer and 2 DNMT3L subunits (DNMT3L-DNMT3A-DNMT3A-DNMT3L). Interacts with histone H3 (via N-terminus); interaction is strongly inhibited by methylation at lysine 4 (H3K4me). Interacts with EZH2; the interaction is direct. Interacts with SPOCD1. In terms of tissue distribution, expressed at low levels in several tissues including testis, ovary, and thymus.

The protein resides in the nucleus. In terms of biological role, catalytically inactive regulatory factor of DNA methyltransferases that can either promote or inhibit DNA methylation depending on the context. Essential for the function of DNMT3A and DNMT3B: activates DNMT3A and DNMT3B by binding to their catalytic domain. Acts by accelerating the binding of DNA and S-adenosyl-L-methionine (AdoMet) to the methyltransferases and dissociates from the complex after DNA binding to the methyltransferases. Recognizes unmethylated histone H3 lysine 4 (H3K4me0) and induces de novo DNA methylation by recruitment or activation of DNMT3. Plays a key role in embryonic stem cells and germ cells. In germ cells, required for the methylation of imprinted loci together with DNMT3A. In male germ cells, specifically required to methylate retrotransposons, preventing their mobilization. Plays a key role in embryonic stem cells (ESCs) by acting both as an positive and negative regulator of DNA methylation. While it promotes DNA methylation of housekeeping genes together with DNMT3A and DNMT3B, it also acts as an inhibitor of DNA methylation at the promoter of bivalent genes. Interacts with the EZH2 component of the PRC2/EED-EZH2 complex, preventing interaction of DNMT3A and DNMT3B with the PRC2/EED-EZH2 complex, leading to maintain low methylation levels at the promoters of bivalent genes. Promotes differentiation of ESCs into primordial germ cells by inhibiting DNA methylation at the promoter of RHOX5, thereby activating its expression. This chain is DNA (cytosine-5)-methyltransferase 3-like (DNMT3L), found in Homo sapiens (Human).